The chain runs to 119 residues: Urease subunit beta (119 aa).

This sequence belongs to the urease beta subunit family. As to quaternary structure, heterotrimer of UreA (gamma), UreB (beta) and UreC (alpha) subunits. Three heterotrimers associate to form the active enzyme.

It localises to the cytoplasm. The catalysed reaction is urea + 2 H2O + H(+) = hydrogencarbonate + 2 NH4(+). It functions in the pathway nitrogen metabolism; urea degradation; CO(2) and NH(3) from urea (urease route): step 1/1. The protein is Urease subunit beta of Tolumonas auensis (strain DSM 9187 / NBRC 110442 / TA 4).